A 559-amino-acid chain; its full sequence is DNA primase (559 aa).

The CHC2-type zinc finger occupies 37–61; that stretch reads CPFHEERSASFSVNQIKGFYHCFGC. Residues 246–327 enclose the Toprim domain; it reads KQVIVTEGYL…RGGVILFENN (82 aa). Positions 252, 296, and 298 each coordinate Mg(2+).

The protein belongs to the DnaG primase family. In terms of assembly, monomer. The C-terminal domain DnaB-binding domain exists as a dimer in solution. Interacts with DnaB via its C-terminal domain (residues 415-559 of DnaG); up to 3 DnaG fragments bind to a DnaB hexamer. Zn(2+) is required as a cofactor. It depends on Mg(2+) as a cofactor.

It carries out the reaction ssDNA + n NTP = ssDNA/pppN(pN)n-1 hybrid + (n-1) diphosphate.. Its function is as follows. RNA polymerase that catalyzes the synthesis of short RNA molecules used as primers for DNA polymerase during DNA replication. Stimulates the 5'-3' DNA helicase activity of DnaB. This is DNA primase from Helicobacter pylori (strain ATCC 700392 / 26695) (Campylobacter pylori).